A 137-amino-acid polypeptide reads, in one-letter code: Proofreading thioesterase EntH (137 aa).

Glu63 (nucleophile or proton acceptor) is an active-site residue.

It belongs to the thioesterase PaaI family. In terms of assembly, homotetramer. Dimer of dimers. Interacts specifically with the aryl carrier protein (ArCP) domain of EntB.

It is found in the cytoplasm. Its pathway is siderophore biosynthesis; enterobactin biosynthesis. Required for optimal enterobactin synthesis. Acts as a proofreading enzyme that prevents EntB misacylation by hydrolyzing the thioester bound existing between EntB and wrongly charged molecules. In Escherichia coli O157:H7 (strain EC4115 / EHEC), this protein is Proofreading thioesterase EntH.